The sequence spans 433 residues: Mitochondrial distribution and morphology protein 12 (433 aa).

Positions 1–433 constitute an SMP-LTD domain; that stretch reads MSIDIDWERA…VYPSFWTFLI (433 aa). Disordered stretches follow at residues 62–113, 180–279, and 356–376; these read LSDP…GGQM, TPLG…RMRE, and GPET…SPRR. Basic and acidic residues predominate over residues 81–96; the sequence is SEERSPTREPVDRYGN. The span at 214 to 236 shows a compositional bias: polar residues; it reads SAQSRPSTANTGNTLPSRDSMSV. The span at 268-279 shows a compositional bias: basic and acidic residues; it reads PLDDTPPRRMRE.

The protein belongs to the MDM12 family. Component of the ER-mitochondria encounter structure (ERMES) or MDM complex, composed of MMM1, MDM10, MDM12 and MDM34. An MMM1 homodimer associates with one molecule of MDM12 on each side in a pairwise head-to-tail manner, and the SMP-LTD domains of MMM1 and MDM12 generate a continuous hydrophobic tunnel for phospholipid trafficking.

The protein resides in the mitochondrion outer membrane. It localises to the endoplasmic reticulum membrane. Functionally, component of the ERMES/MDM complex, which serves as a molecular tether to connect the endoplasmic reticulum (ER) and mitochondria. Components of this complex are involved in the control of mitochondrial shape and protein biogenesis, and function in nonvesicular lipid trafficking between the ER and mitochondria. MDM12 is required for the interaction of the ER-resident membrane protein MMM1 and the outer mitochondrial membrane-resident beta-barrel protein MDM10. The MDM12-MMM1 subcomplex functions in the major beta-barrel assembly pathway that is responsible for biogenesis of all mitochondrial outer membrane beta-barrel proteins, and acts in a late step after the SAM complex. The MDM10-MDM12-MMM1 subcomplex further acts in the TOM40-specific pathway after the action of the MDM12-MMM1 complex. Essential for establishing and maintaining the structure of mitochondria and maintenance of mtDNA nucleoids. The chain is Mitochondrial distribution and morphology protein 12 from Ajellomyces capsulatus (strain NAm1 / WU24) (Darling's disease fungus).